The following is a 218-amino-acid chain: Ribosomal RNA large subunit methyltransferase E (218 aa).

S-adenosyl-L-methionine-binding residues include glycine 64, tryptophan 66, aspartate 92, aspartate 108, and aspartate 133. Lysine 173 functions as the Proton acceptor in the catalytic mechanism.

It belongs to the class I-like SAM-binding methyltransferase superfamily. RNA methyltransferase RlmE family.

The protein resides in the cytoplasm. It catalyses the reaction uridine(2552) in 23S rRNA + S-adenosyl-L-methionine = 2'-O-methyluridine(2552) in 23S rRNA + S-adenosyl-L-homocysteine + H(+). In terms of biological role, specifically methylates the uridine in position 2552 of 23S rRNA at the 2'-O position of the ribose in the fully assembled 50S ribosomal subunit. This chain is Ribosomal RNA large subunit methyltransferase E, found in Paracidovorax citrulli (strain AAC00-1) (Acidovorax citrulli).